We begin with the raw amino-acid sequence, 425 residues long: Dihydroorotase (425 aa).

Zn(2+)-binding residues include His-61 and His-63. Substrate is bound by residues 63–65 (HLR) and Asn-95. Zn(2+) is bound by residues Asp-153, His-180, and His-233. A substrate-binding site is contributed by Asn-279. Residue Asp-306 coordinates Zn(2+). Asp-306 is an active-site residue. His-310 is a substrate binding site.

Belongs to the metallo-dependent hydrolases superfamily. DHOase family. Class I DHOase subfamily. Requires Zn(2+) as cofactor.

The enzyme catalyses (S)-dihydroorotate + H2O = N-carbamoyl-L-aspartate + H(+). The protein operates within pyrimidine metabolism; UMP biosynthesis via de novo pathway; (S)-dihydroorotate from bicarbonate: step 3/3. Functionally, catalyzes the reversible cyclization of carbamoyl aspartate to dihydroorotate. The sequence is that of Dihydroorotase from Geobacter sulfurreducens (strain ATCC 51573 / DSM 12127 / PCA).